A 346-amino-acid chain; its full sequence is MNNFRWFWFFIKSRINWILWILFLNIILLGVAYIDYEISVESVFYIVILNVGLSILFLLFTFVKEVRLSKHFYEDKEIEEIKHKDLAETPFQQQVIDYLYRHIAAQKEKVVEQQLQIKNHEQTITEFVHDIKTPVTAMKLLIDQENDDQRKRALLFEWSRINEMLDKQLYLTRLETHHRDMYFDYISLKRMVIDEIQVTRHISQAKGIGFELDFKDEQKVYTDVKWCRMMIRQVLSNSLKYSDNSTINLSGYNIEGHVVLKIKDYGRGISKRDLPRIFDRGFTSTTDRNDTASSGMGLYLVQSVKEQLGIEVKVDSIVGKGTTFYFIFPQQNEIIERMSKVTRLSF.

2 helical membrane passes run 15-35 (INWILWILFLNIILLGVAYID) and 43-63 (VFYIVILNVGLSILFLLFTFV). The Histidine kinase domain occupies 126–332 (EFVHDIKTPV…TFYFIFPQQN (207 aa)). The residue at position 129 (His129) is a Phosphohistidine; by autocatalysis.

In terms of processing, autophosphorylated.

The protein localises to the cell membrane. It carries out the reaction ATP + protein L-histidine = ADP + protein N-phospho-L-histidine.. Functionally, member of the two-component regulatory system GraR/GraS involved in resistance against cationic antimicrobial peptides (CAMPs). GraS probably functions as a sensor protein kinase which is autophosphorylated at a histidine residue and transfers its phosphate group to GraR. The chain is Sensor histidine kinase GraS (graS) from Staphylococcus epidermidis (strain ATCC 35984 / DSM 28319 / BCRC 17069 / CCUG 31568 / BM 3577 / RP62A).